The chain runs to 37 residues: Photosystem I reaction center subunit VIII (37 aa).

A helical membrane pass occupies residues 7–27 (LPAIFVPLVGLVFPAIAMVSL).

Belongs to the PsaI family.

Its subcellular location is the plastid. The protein localises to the chloroplast thylakoid membrane. Functionally, may help in the organization of the PsaL subunit. The chain is Photosystem I reaction center subunit VIII from Morus indica (Mulberry).